The following is a 423-amino-acid chain: Enolase (423 aa).

Q165 is a binding site for (2R)-2-phosphoglycerate. Catalysis depends on E209, which acts as the Proton donor. Residues D244, E285, and D310 each coordinate Mg(2+). (2R)-2-phosphoglycerate contacts are provided by K335, R364, S365, and K386. Catalysis depends on K335, which acts as the Proton acceptor.

Belongs to the enolase family. As to quaternary structure, homooctamer formed by a tetramer of dimers. Mg(2+) is required as a cofactor.

It localises to the cytoplasm. The protein resides in the secreted. The protein localises to the cell surface. The catalysed reaction is (2R)-2-phosphoglycerate = phosphoenolpyruvate + H2O. It participates in carbohydrate degradation; glycolysis; pyruvate from D-glyceraldehyde 3-phosphate: step 4/5. With respect to regulation, the covalent binding to the substrate causes inactivation of the enzyme, and possibly serves as a signal for the export of the protein. Catalyzes the reversible conversion of 2-phosphoglycerate (2-PG) into phosphoenolpyruvate (PEP). It is essential for the degradation of carbohydrates via glycolysis. The polypeptide is Enolase (Methanocaldococcus jannaschii (strain ATCC 43067 / DSM 2661 / JAL-1 / JCM 10045 / NBRC 100440) (Methanococcus jannaschii)).